The primary structure comprises 273 residues: 3-methyl-2-oxobutanoate hydroxymethyltransferase 1 (273 aa).

The Mg(2+) site is built by D49 and D88. Residues 49-50, D88, and K118 each bind 3-methyl-2-oxobutanoate; that span reads DS. Position 120 (E120) interacts with Mg(2+). Residue E187 is the Proton acceptor of the active site.

This sequence belongs to the PanB family. Homodecamer; pentamer of dimers. It depends on Mg(2+) as a cofactor.

The protein resides in the cytoplasm. It catalyses the reaction 3-methyl-2-oxobutanoate + (6R)-5,10-methylene-5,6,7,8-tetrahydrofolate + H2O = 2-dehydropantoate + (6S)-5,6,7,8-tetrahydrofolate. Its pathway is cofactor biosynthesis; (R)-pantothenate biosynthesis; (R)-pantoate from 3-methyl-2-oxobutanoate: step 1/2. In terms of biological role, catalyzes the reversible reaction in which hydroxymethyl group from 5,10-methylenetetrahydrofolate is transferred onto alpha-ketoisovalerate to form ketopantoate. This is 3-methyl-2-oxobutanoate hydroxymethyltransferase 1 from Pseudomonas aeruginosa (strain UCBPP-PA14).